The sequence spans 987 residues: SNF2 domain-containing protein ENL1 (987 aa).

Disordered stretches follow at residues 1–172 (MASP…AYGG) and 224–245 (FGDY…ENHA). 2 stretches are compositionally biased toward pro residues: residues 18 to 27 (TPPAPTPLAA) and 51 to 71 (NPNP…PQEP). Over residues 99–110 (DSIRDILDDLTT) the composition is skewed to basic and acidic residues. Polar residues predominate over residues 141–156 (PSQSQLNDGTKPSSSF). Positions 226-237 (DYDDEDDIDQDA) are enriched in acidic residues. In terms of domain architecture, Helicase ATP-binding spans 292–466 (WVLHCRGTGG…WALFYFCCPE (175 aa)). 305–312 (DDMGLGKT) serves as a coordination point for ATP. The DEAH box signature appears at 417–420 (DEGH). Residues 645-801 (SLLQNLVSEG…TRYFSKRDIQ (157 aa)) enclose the Helicase C-terminal domain.

This sequence belongs to the SNF2/RAD54 helicase family. In terms of tissue distribution, expressed in ovaries, roots, shoots and leaves.

Its subcellular location is the cytoplasm. It is found in the chromosome. In terms of biological role, DNA helicase that acts as an essential component of the spindle assembly checkpoint. Plays an indispensable role in the development of seed endosperm. Is required to secure sister chromosome separation during endosperm syncytial mitosis, which involves extremely rapid free nuclear cycles. The chain is SNF2 domain-containing protein ENL1 from Oryza sativa subsp. japonica (Rice).